Reading from the N-terminus, the 225-residue chain is NAD(P)H-quinone oxidoreductase subunit K, chloroplastic (225 aa).

Positions 43, 44, 108, and 139 each coordinate [4Fe-4S] cluster.

The protein belongs to the complex I 20 kDa subunit family. As to quaternary structure, NDH is composed of at least 16 different subunits, 5 of which are encoded in the nucleus. Requires [4Fe-4S] cluster as cofactor.

The protein localises to the plastid. It localises to the chloroplast thylakoid membrane. It catalyses the reaction a plastoquinone + NADH + (n+1) H(+)(in) = a plastoquinol + NAD(+) + n H(+)(out). The catalysed reaction is a plastoquinone + NADPH + (n+1) H(+)(in) = a plastoquinol + NADP(+) + n H(+)(out). Its function is as follows. NDH shuttles electrons from NAD(P)H:plastoquinone, via FMN and iron-sulfur (Fe-S) centers, to quinones in the photosynthetic chain and possibly in a chloroplast respiratory chain. The immediate electron acceptor for the enzyme in this species is believed to be plastoquinone. Couples the redox reaction to proton translocation, and thus conserves the redox energy in a proton gradient. This Guizotia abyssinica (Niger) protein is NAD(P)H-quinone oxidoreductase subunit K, chloroplastic.